The primary structure comprises 1040 residues: Multidrug resistance protein MdtB (1040 aa).

12 helical membrane passes run 16 to 36 (FIMR…AGII), 347 to 367 (LMMA…NIPA), 369 to 389 (IIPG…MVFL), 396 to 416 (LTLM…IVVI), 440 to 460 (IGFT…PLLF), 472 to 492 (FAIT…TLTP), 537 to 557 (WLTL…WVFI), 863 to 883 (LGST…VLGI), 888 to 908 (FIHP…ALLA), 911 to 931 (IAGS…IGIV), 968 to 988 (ILMT…STGV), and 998 to 1018 (IGMV…TPVI).

The protein belongs to the resistance-nodulation-cell division (RND) (TC 2.A.6) family. MdtB subfamily. In terms of assembly, part of a tripartite efflux system composed of MdtA, MdtB and MdtC. MdtB forms a heteromultimer with MdtC.

It localises to the cell inner membrane. Functionally, the MdtABC tripartite complex confers resistance against novobiocin and deoxycholate. This is Multidrug resistance protein MdtB from Escherichia coli O8 (strain IAI1).